The sequence spans 167 residues: MANIEKKNHNDLQEKLITVNRVSKTVKGGRIFSFTALTVVGNGDGKVGFGYGKAREVPAAIQKAMEQARRNMITIPLVNKTLQHSLKGSHTGSNVFMKPASDGTGIIAGGAMRAVLEVAGIHNVLAKTYGSTNPINVVRATMNGLVNMKSPEMIAAKRNKRIKDILG.

In terms of domain architecture, S5 DRBM spans 12-75; that stretch reads LQEKLITVNR…EQARRNMITI (64 aa).

Belongs to the universal ribosomal protein uS5 family. As to quaternary structure, part of the 30S ribosomal subunit. Contacts proteins S4 and S8.

Functionally, with S4 and S12 plays an important role in translational accuracy. In terms of biological role, located at the back of the 30S subunit body where it stabilizes the conformation of the head with respect to the body. This Buchnera aphidicola subsp. Acyrthosiphon pisum (strain APS) (Acyrthosiphon pisum symbiotic bacterium) protein is Small ribosomal subunit protein uS5.